A 377-amino-acid chain; its full sequence is Palmitoyltransferase ZDHHC16 (377 aa).

Residues 1–77 are Cytoplasmic-facing; that stretch reads MRGQRSLLLG…VYWLVDNVIR (77 aa). A helical membrane pass occupies residues 78–98; the sequence is WFGVVFVVLVIVLTGSIVAIA. Over 99 to 116 the chain is Lumenal; that stretch reads YLCVLPLILRTYSVPRLC. The helical transmembrane segment at 117 to 137 threads the bilayer; the sequence is WHFFYSHWNLILIVFHYYQAI. The Cytoplasmic portion of the chain corresponds to 138–198; that stretch reads TTPPGYPPQG…NNCVGHYNHR (61 aa). A DHHC domain is found at 155-205; the sequence is SICKKCIYPKPARTHHCSICNRCVLKMDHHCPWLNNCVGHYNHRYFFSFCF. Cysteine 185 (S-palmitoyl cysteine intermediate) is an active-site residue. The chain crosses the membrane as a helical span at residues 199-219; it reads YFFSFCFFMTLGCVYCSYGSW. Over 220–266 the chain is Lumenal; it reads DLFREAYAAIEKMKQLDKNKLQAVANQTYHQTPPPIFSFRERMTHKS. The chain crosses the membrane as a helical span at residues 267-287; it reads LVYLWFLCSSVALALGALTVW. Residues 288–377 lie on the Cytoplasmic side of the membrane; that stretch reads HAVLISRGET…TAHSASVMAV (90 aa).

Belongs to the DHHC palmitoyltransferase family. In terms of assembly, interacts with ABL1. Interacts with COPS5/JAB1.

Its subcellular location is the endoplasmic reticulum membrane. The enzyme catalyses L-cysteinyl-[protein] + hexadecanoyl-CoA = S-hexadecanoyl-L-cysteinyl-[protein] + CoA. Its function is as follows. Palmitoyl acyltransferase that mediates palmitoylation of proteins such as PLN and ZDHHC6. Required during embryonic heart development and cardiac function, possibly by mediating palmitoylation of PLN, thereby affecting PLN phosphorylation and homooligomerization. Also required for eye development. Palmitoylates ZDHHC6, affecting the quaternary assembly of ZDHHC6, its localization, stability and function. May play a role in DNA damage response. May be involved in apoptosis regulation. Involved in the proliferation of neural stem cells by regulating the FGF/ERK pathway. The chain is Palmitoyltransferase ZDHHC16 from Macaca fascicularis (Crab-eating macaque).